The chain runs to 356 residues: Cyclin-D1-binding protein 1 (356 aa).

At A2 the chain carries N-acetylalanine. Interaction with TCF3 regions lie at residues 2-181 (ASST…VDFV) and 147-356 (ISCN…AAEL). Positions 2 to 187 (ASSTAAVPFL…VDFVKDAHEE (186 aa)) are interaction with RPLP0. Residues 2 to 205 (ASSTAAVPFL…DPYSGLLNDS (204 aa)) are required for interaction with CCND1. Residues 198–224 (YSGLLNDSEDNSDSHSDEDGVLGLPSN) are disordered. The interval 236-356 (LIIPCLALVR…KALTQRAAEL (121 aa)) is interaction with RPLP0.

It belongs to the CCNDBP1 family. In terms of assembly, interacts with CCND1 and GRAP2. May also interact with COPS5, RPLP0, SIRT6, SYF2 and TCF3. Post-translationally, phosphorylated. In terms of tissue distribution, expressed at high levels in brain, intestine, muscle and ovary and at lower levels in heart, kidney, liver, lung, spleen and testis.

The protein resides in the cytoplasm. It is found in the nucleus. In terms of biological role, may negatively regulate cell cycle progression. May act at least in part via inhibition of the cyclin-D1/CDK4 complex, thereby preventing phosphorylation of RB1 and blocking E2F-dependent transcription. May be required for hepatocyte proliferation. In Mus musculus (Mouse), this protein is Cyclin-D1-binding protein 1 (Ccndbp1).